The chain runs to 644 residues: Threonine--tRNA ligase (644 aa).

A TGS domain is found at 1–61 (MVAITLPDGS…AHDAKVEIVT (61 aa)). Residues 242 to 533 (DHRKIGKALN…LIENYAGWMP (292 aa)) form a catalytic region. Cys333, His384, and His510 together coordinate Zn(2+).

The protein belongs to the class-II aminoacyl-tRNA synthetase family. In terms of assembly, homodimer. Zn(2+) is required as a cofactor.

Its subcellular location is the cytoplasm. The catalysed reaction is tRNA(Thr) + L-threonine + ATP = L-threonyl-tRNA(Thr) + AMP + diphosphate + H(+). Its function is as follows. Catalyzes the attachment of threonine to tRNA(Thr) in a two-step reaction: L-threonine is first activated by ATP to form Thr-AMP and then transferred to the acceptor end of tRNA(Thr). Also edits incorrectly charged L-seryl-tRNA(Thr). The polypeptide is Threonine--tRNA ligase (Psychrobacter cryohalolentis (strain ATCC BAA-1226 / DSM 17306 / VKM B-2378 / K5)).